Here is an 84-residue protein sequence, read N- to C-terminus: Toxin Tst1 (84 aa).

The N-terminal stretch at 1–19 is a signal peptide; that stretch reads MKGMILFISCLLLIDIVVG. Residues 21–82 enclose the LCN-type CS-alpha/beta domain; the sequence is KEGYLMDHEG…VWDRATNKCG (62 aa). 4 disulfide bridges follow: cysteine 31–cysteine 81, cysteine 35–cysteine 57, cysteine 43–cysteine 62, and cysteine 47–cysteine 64. Position 81 is a cysteine amide (cysteine 81).

As to expression, expressed by the venom gland.

Its subcellular location is the secreted. Functionally, beta toxins bind voltage-independently at site-4 of sodium channels (Nav) and shift the voltage of activation toward more negative potentials thereby affecting sodium channel activation and promoting spontaneous and repetitive firing. This toxin is active only on mammals. Is toxic to mice. In Tityus stigmurus (Brazilian scorpion), this protein is Toxin Tst1.